The following is a 389-amino-acid chain: MPRNYLFSSESVSEGHPDKMADQISDAILDALLAQDPLSRVACETMVSTGFCTIAGEITTKAVIDYQKIARETINAIGYTSADTMGYSGDTAAIFVALDKQSVDIAQGVNEGEGIDLDQGAGDQGIMFGYACTETDVLMPMPIYYAHRLMEKHAELRKSGELAWARPDAKSQVTVRYVDDKPVSVEAVVISSQHSPDVDHDTIEKEIIEKVIRAVIPAELLHEGTQYFINPTGRFVIGGPVGDAGVTGRKIIVDTYGGMGSHGGGAFSGKDPSKVDRSSAYMGRYVAKNIVAAGLAEKCEIQVAYAIGVSQPMSVMVDTFGTGKLDDEAITELVKKHFDLRPKAIVQQLDLLRPIYKKSAAYGHFGRELPEFTWERTDKAAALRADAGL.

His-16 lines the ATP pocket. A Mg(2+)-binding site is contributed by Asp-18. Glu-44 contributes to the K(+) binding site. L-methionine-binding residues include Glu-57 and Gln-101. Residues 101–111 (QSVDIAQGVNE) are flexible loop. ATP-binding positions include 168–170 (DAK), 234–235 (RF), Asp-243, 249–250 (RK), Ala-266, and Lys-270. Residue Asp-243 coordinates L-methionine. Position 274 (Lys-274) interacts with L-methionine.

Belongs to the AdoMet synthase family. In terms of assembly, homotetramer; dimer of dimers. Requires Mg(2+) as cofactor. K(+) is required as a cofactor.

The protein resides in the cytoplasm. It carries out the reaction L-methionine + ATP + H2O = S-adenosyl-L-methionine + phosphate + diphosphate. The protein operates within amino-acid biosynthesis; S-adenosyl-L-methionine biosynthesis; S-adenosyl-L-methionine from L-methionine: step 1/1. In terms of biological role, catalyzes the formation of S-adenosylmethionine (AdoMet) from methionine and ATP. The overall synthetic reaction is composed of two sequential steps, AdoMet formation and the subsequent tripolyphosphate hydrolysis which occurs prior to release of AdoMet from the enzyme. This Magnetococcus marinus (strain ATCC BAA-1437 / JCM 17883 / MC-1) protein is S-adenosylmethionine synthase.